A 572-amino-acid chain; its full sequence is Proline--tRNA ligase (572 aa).

The protein belongs to the class-II aminoacyl-tRNA synthetase family. ProS type 1 subfamily. Homodimer.

It is found in the cytoplasm. It carries out the reaction tRNA(Pro) + L-proline + ATP = L-prolyl-tRNA(Pro) + AMP + diphosphate. Catalyzes the attachment of proline to tRNA(Pro) in a two-step reaction: proline is first activated by ATP to form Pro-AMP and then transferred to the acceptor end of tRNA(Pro). As ProRS can inadvertently accommodate and process non-cognate amino acids such as alanine and cysteine, to avoid such errors it has two additional distinct editing activities against alanine. One activity is designated as 'pretransfer' editing and involves the tRNA(Pro)-independent hydrolysis of activated Ala-AMP. The other activity is designated 'posttransfer' editing and involves deacylation of mischarged Ala-tRNA(Pro). The misacylated Cys-tRNA(Pro) is not edited by ProRS. The protein is Proline--tRNA ligase of Serratia proteamaculans (strain 568).